Consider the following 360-residue polypeptide: Epoxyqueuosine reductase (360 aa).

Catalysis depends on Asp142, which acts as the Proton donor. Positions 187-216 (APTEPVTAHCGSCQACMDVCPTQAIVAPHR) constitute a 4Fe-4S ferredoxin-type domain. The [4Fe-4S] cluster site is built by Cys196, Cys199, Cys202, Cys206, Cys222, Cys249, Cys252, and Cys256.

The protein belongs to the QueG family. Monomer. Requires cob(II)alamin as cofactor. The cofactor is [4Fe-4S] cluster.

Its subcellular location is the cytoplasm. The enzyme catalyses epoxyqueuosine(34) in tRNA + AH2 = queuosine(34) in tRNA + A + H2O. Its pathway is tRNA modification; tRNA-queuosine biosynthesis. Functionally, catalyzes the conversion of epoxyqueuosine (oQ) to queuosine (Q), which is a hypermodified base found in the wobble positions of tRNA(Asp), tRNA(Asn), tRNA(His) and tRNA(Tyr). The sequence is that of Epoxyqueuosine reductase from Alicycliphilus denitrificans (strain DSM 14773 / CIP 107495 / K601).